Here is a 370-residue protein sequence, read N- to C-terminus: Cytochrome b (370 aa).

Transmembrane regions (helical) follow at residues 25-45 (FGSM…FLAV), 69-90 (WLMQ…YIHI), 105-125 (WLSG…GYVL), and 170-190 (FFAL…LHIM). Positions 75 and 89 each coordinate heme b. 2 residues coordinate heme b: histidine 174 and histidine 188. Residue histidine 193 participates in a ubiquinone binding. 4 helical membrane passes run 218-238 (YKDL…VSFF), 280-300 (LGGA…PFTH), 312-332 (FMQL…WTAT), and 339-358 (FTTI…ISNP).

The protein belongs to the cytochrome b family. The cytochrome bc1 complex contains 3 respiratory subunits (MT-CYB, CYC1 and UQCRFS1), 2 core proteins (UQCRC1 and UQCRC2) and probably 6 low-molecular weight proteins. Heme b is required as a cofactor.

The protein resides in the mitochondrion inner membrane. Functionally, component of the ubiquinol-cytochrome c reductase complex (complex III or cytochrome b-c1 complex) that is part of the mitochondrial respiratory chain. The b-c1 complex mediates electron transfer from ubiquinol to cytochrome c. Contributes to the generation of a proton gradient across the mitochondrial membrane that is then used for ATP synthesis. The sequence is that of Cytochrome b (MT-CYB) from Chilabothrus fordii (Ford's boa).